Here is a 316-residue protein sequence, read N- to C-terminus: NADH-cytochrome b5 reductase-like (316 aa).

The Oxidoreductase-like domain maps to 17 to 53 (KPVEPLPSQCCGSGCSPCVFDLYYRDLERWETARARN). The 103-residue stretch at 76-178 (ETFLAFHIST…RGPFGSFLYE (103 aa)) folds into the FAD-binding FR-type domain. Residues 158–173 (ESWRTGDTAFWRGPFG) and 183–215 (GELLMLAAGTGLAPMVPILQSITDDEDDETFVT) each bind FAD.

It belongs to the flavoprotein pyridine nucleotide cytochrome reductase family. FAD is required as a cofactor.

The enzyme catalyses 2 Fe(III)-[cytochrome b5] + NADH = 2 Fe(II)-[cytochrome b5] + NAD(+) + H(+). NADH-cytochrome b5 reductases are involved in desaturation and elongation of fatty acids, cholesterol biosynthesis, drug metabolism, and, in erythrocyte, methemoglobin reduction. This is NADH-cytochrome b5 reductase-like (Cyb5rl) from Mus musculus (Mouse).